A 956-amino-acid polypeptide reads, in one-letter code: Zinc protease PQQL-like (956 aa).

The residue at position 1 (Met-1) is an N-acetylmethionine. Zn(2+) is bound at residue His-85. The active-site Proton acceptor is the Glu-88. His-89 lines the Zn(2+) pocket. Glu-165 is a catalytic residue. Zn(2+) is bound at residue Glu-172.

This sequence belongs to the peptidase M16 family. Zn(2+) serves as cofactor.

In Arabidopsis thaliana (Mouse-ear cress), this protein is Zinc protease PQQL-like.